The following is a 590-amino-acid chain: Pentatricopeptide repeat-containing protein At2g46050, mitochondrial (590 aa).

The N-terminal 109 residues, 1 to 109, are a transit peptide targeting the mitochondrion; it reads MRFTFLRSTR…RNIVTWNILI (109 aa). PPR repeat units follow at residues 141-175, 176-206, 207-241, 244-266, 275-305, 306-340, 341-375, 376-406, 407-437, 441-471, and 477-507; these read DHVS…GLES, SCFP…VLDR, DLVL…KNRF, DYFT…IHAI, DIPV…MVVR, NVVS…NLQP, DELT…GSAD, FLSV…IREP, DLVS…MLQK, DKIT…MTEF, and EDEH…MPTE. Residues 512 to 588 are type E motif; it reads ALAAFTGGCN…TPGCSWLGDY (77 aa).

This sequence belongs to the PPR family. PCMP-E subfamily.

The protein resides in the mitochondrion. In Arabidopsis thaliana (Mouse-ear cress), this protein is Pentatricopeptide repeat-containing protein At2g46050, mitochondrial (PCMP-E39).